A 243-amino-acid polypeptide reads, in one-letter code: MAELLLGVNIDHIATLRNARGTAYPDPVQAAFIAEQAGADGITVHLREDRRHITDRDVRILRQTLDTRMNLEMAVTEEMLAIAVETKPHFCCLVPEKRQEVTTEGGLDVAGQREKMRDACKRLTDAGIQVSLFIDADEEQIKAAAEVGAPFIEIHTGCYADAKTDAEQAQELVRIAKAATFAASLGLKVNAGHGLTYHNVKAIAAIPEMHELNIGHAIIGRAVMTGLKDAVAEMKRLMLEARG.

Asn-9 lines the 3-amino-2-oxopropyl phosphate pocket. 11 to 12 (DH) serves as a coordination point for 1-deoxy-D-xylulose 5-phosphate. Position 20 (Arg-20) interacts with 3-amino-2-oxopropyl phosphate. The active-site Proton acceptor is His-45. Residues Arg-47 and His-52 each contribute to the 1-deoxy-D-xylulose 5-phosphate site. Glu-72 functions as the Proton acceptor in the catalytic mechanism. Thr-102 contacts 1-deoxy-D-xylulose 5-phosphate. Residue His-193 is the Proton donor of the active site. 3-amino-2-oxopropyl phosphate is bound by residues Gly-194 and 215-216 (GH).

This sequence belongs to the PNP synthase family. In terms of assembly, homooctamer; tetramer of dimers.

The protein resides in the cytoplasm. The enzyme catalyses 3-amino-2-oxopropyl phosphate + 1-deoxy-D-xylulose 5-phosphate = pyridoxine 5'-phosphate + phosphate + 2 H2O + H(+). The protein operates within cofactor biosynthesis; pyridoxine 5'-phosphate biosynthesis; pyridoxine 5'-phosphate from D-erythrose 4-phosphate: step 5/5. Its function is as follows. Catalyzes the complicated ring closure reaction between the two acyclic compounds 1-deoxy-D-xylulose-5-phosphate (DXP) and 3-amino-2-oxopropyl phosphate (1-amino-acetone-3-phosphate or AAP) to form pyridoxine 5'-phosphate (PNP) and inorganic phosphate. The chain is Pyridoxine 5'-phosphate synthase from Shigella boydii serotype 4 (strain Sb227).